Here is a 624-residue protein sequence, read N- to C-terminus: Actin-related protein 8 (624 aa).

Position 1 is an N-acetylmethionine (Met-1). Over residues 1–25 (MTQAEKGDAENGKEKGGEKEKEQRG) the composition is skewed to basic and acidic residues. The segment at 1 to 29 (MTQAEKGDAENGKEKGGEKEKEQRGVKRP) is disordered. The ATP site is built by Ser-55 and Thr-56. Phosphoserine is present on Ser-132. 283–286 (DVGD) contributes to the ATP binding site. Ser-412 is subject to Phosphoserine. Residues 430-462 (SKQEQSAKATADRKSASKPIGFEGDLRGQSSDL) are disordered.

Belongs to the actin family. ARP8 subfamily. In terms of assembly, component of the chromatin remodeling INO80 complex; specifically part of a complex module associated with the DBINO domain of INO80. Exists as monomers and dimers, but the dimer is most probably the biologically relevant form required for stable interactions with histones that exploits the twofold symmetry of the nucleosome core.

It is found in the nucleus. It localises to the chromosome. Plays an important role in the functional organization of mitotic chromosomes. Exhibits low basal ATPase activity, and unable to polymerize. In terms of biological role, proposed core component of the chromatin remodeling INO80 complex which is involved in transcriptional regulation, DNA replication and probably DNA repair. Required for the recruitment of INO80 (and probably the INO80 complex) to sites of DNA damage Strongly prefer nucleosomes and H3-H4 tetramers over H2A-H2B dimers, suggesting it may act as a nucleosome recognition module within the complex. The protein is Actin-related protein 8 (Actr8) of Mus musculus (Mouse).